The sequence spans 251 residues: MVNATVARNIAGICGNVISLFLFLSPIPTFITIYKKKKVEEYKADPYLATVLNCALWVFYGLPMVQPDSLLVITINGTGLAIELVYLAIFFFFSPTSRKVKVGLWLIGEMVFVGIVATCTLLLFHTHNQRSSFVGIFCVIFVSLMYIAPLTIMSKVIKTKSVKYMPFSLSLANFLNGVVWVIYALIKFDLFILIGNGLGTVSGAVQLILYACYYKTTPKDDEDEEDEENLSKVNSQLQLSGNSGQAKRVSA.

Over 1 to 12 the chain is Extracellular; the sequence is MVNATVARNIAG. N-linked (GlcNAc...) asparagine glycosylation is present at Asn-3. The region spanning 12–96 is the MtN3/slv 1 domain; sequence GICGNVISLF…LAIFFFFSPT (85 aa). The chain crosses the membrane as a helical span at residues 13-33; it reads ICGNVISLFLFLSPIPTFITI. Residues 34 to 45 lie on the Cytoplasmic side of the membrane; sequence YKKKKVEEYKAD. A helical transmembrane segment spans residues 46-66; that stretch reads PYLATVLNCALWVFYGLPMVQ. The Extracellular portion of the chain corresponds to 67-72; the sequence is PDSLLV. A helical transmembrane segment spans residues 73–93; that stretch reads ITINGTGLAIELVYLAIFFFF. Residues 94–103 are Cytoplasmic-facing; the sequence is SPTSRKVKVG. Residues 104–124 traverse the membrane as a helical segment; sequence LWLIGEMVFVGIVATCTLLLF. Over 125-132 the chain is Extracellular; sequence HTHNQRSS. The chain crosses the membrane as a helical span at residues 133 to 153; the sequence is FVGIFCVIFVSLMYIAPLTIM. The region spanning 133-216 is the MtN3/slv 2 domain; sequence FVGIFCVIFV…LILYACYYKT (84 aa). At 154-163 the chain is on the cytoplasmic side; it reads SKVIKTKSVK. The helical transmembrane segment at 164-186 threads the bilayer; the sequence is YMPFSLSLANFLNGVVWVIYALI. Residues 187-190 lie on the Extracellular side of the membrane; it reads KFDL. The chain crosses the membrane as a helical span at residues 191–213; the sequence is FILIGNGLGTVSGAVQLILYACY. At 214–251 the chain is on the cytoplasmic side; that stretch reads YKTTPKDDEDEEDEENLSKVNSQLQLSGNSGQAKRVSA. The disordered stretch occupies residues 220–251; that stretch reads DDEDEEDEENLSKVNSQLQLSGNSGQAKRVSA. Positions 231-245 are enriched in polar residues; the sequence is SKVNSQLQLSGNSGQ.

This sequence belongs to the SWEET sugar transporter family. As to quaternary structure, forms homooligomers and heterooligomers with SWEET8 and SWEET17.

It is found in the cell membrane. Mediates both low-affinity uptake and efflux of sugar across the plasma membrane. In Arabidopsis thaliana (Mouse-ear cress), this protein is Bidirectional sugar transporter SWEET4.